Here is a 221-residue protein sequence, read N- to C-terminus: Cysteine-rich venom protein (221 aa).

Glycine 1 is a signal peptide. Residues 21–148 (DLHNSLRRSV…EYKYFYVCQY (128 aa)) enclose the SCP domain. Intrachain disulfides connect cysteine 57–cysteine 135, cysteine 74–cysteine 149, cysteine 130–cysteine 146, cysteine 168–cysteine 175, cysteine 171–cysteine 180, cysteine 184–cysteine 216, cysteine 193–cysteine 210, and cysteine 201–cysteine 214. In terms of domain architecture, ShKT spans 184–216 (CTHEDKFTNCKDLVKQGCNNNYLKTNCPASCSC).

It belongs to the CRISP family. In terms of tissue distribution, expressed by the venom gland.

It localises to the secreted. In terms of biological role, blocks contraction of smooth muscle elicited by high potassium-induced depolarization, but does not block caffeine-stimulated contraction. May target voltage-gated calcium channels in smooth muscle. This chain is Cysteine-rich venom protein, found in Vipera nikolskii (Nikolsky's adder).